The chain runs to 196 residues: Probable molybdenum cofactor guanylyltransferase (196 aa).

Residues 7–9 (LAG), Lys-19, Asp-68, and Asp-93 each bind GTP. Asp-93 is a binding site for Mg(2+).

This sequence belongs to the MobA family. Requires Mg(2+) as cofactor.

Its subcellular location is the cytoplasm. It carries out the reaction Mo-molybdopterin + GTP + H(+) = Mo-molybdopterin guanine dinucleotide + diphosphate. Functionally, transfers a GMP moiety from GTP to Mo-molybdopterin (Mo-MPT) cofactor (Moco or molybdenum cofactor) to form Mo-molybdopterin guanine dinucleotide (Mo-MGD) cofactor. This is Probable molybdenum cofactor guanylyltransferase from Pyrococcus furiosus (strain ATCC 43587 / DSM 3638 / JCM 8422 / Vc1).